The chain runs to 407 residues: Ribosomal protein uL3-like (407 aa).

Basic residues predominate over residues 1 to 31 (MSHRKFSAPRHGHLGFLPHKRSHRHRGKVKT). Disordered stretches follow at residues 1-35 (MSHR…WPRD) and 387-407 (AFMG…SGDL).

This sequence belongs to the universal ribosomal protein uL3 family. As to quaternary structure, component of the large ribosomal subunit in striated muscle cells.

Functionally, heart- and skeletal muscle-specific component of the ribosome, which regulates muscle function. Component of the large ribosomal subunit in striated muscle cells: replaces the RPL3 paralog in the ribosome in these cells. The ribosome is a large ribonucleoprotein complex responsible for the synthesis of proteins in the cell. Inhibits myotube growth and muscle function. This Homo sapiens (Human) protein is Ribosomal protein uL3-like.